The following is a 205-amino-acid chain: GTP cyclohydrolase 1 (205 aa).

Zn(2+) is bound by residues C94, H97, and C165.

This sequence belongs to the GTP cyclohydrolase I family. As to quaternary structure, homomer.

It carries out the reaction GTP + H2O = 7,8-dihydroneopterin 3'-triphosphate + formate + H(+). It participates in cofactor biosynthesis; 7,8-dihydroneopterin triphosphate biosynthesis; 7,8-dihydroneopterin triphosphate from GTP: step 1/1. This chain is GTP cyclohydrolase 1, found in Sinorhizobium fredii (strain NBRC 101917 / NGR234).